The following is a 202-amino-acid chain: Ribonuclease HII (202 aa).

One can recognise an RNase H type-2 domain in the interval 15–202 (QGVAGVDEAG…APIKAFGISA (188 aa)). A divalent metal cation-binding residues include aspartate 21, glutamate 22, and aspartate 113.

Belongs to the RNase HII family. It depends on Mn(2+) as a cofactor. The cofactor is Mg(2+).

The protein resides in the cytoplasm. It carries out the reaction Endonucleolytic cleavage to 5'-phosphomonoester.. Endonuclease that specifically degrades the RNA of RNA-DNA hybrids. The polypeptide is Ribonuclease HII (Bordetella avium (strain 197N)).